The following is a 544-amino-acid chain: Chaperonin GroEL (544 aa).

ATP-binding positions include 29 to 32 (TLGP), 86 to 90 (DGTTT), glycine 413, 476 to 478 (NAA), and aspartate 492.

Belongs to the chaperonin (HSP60) family. In terms of assembly, forms a cylinder of 14 subunits composed of two heptameric rings stacked back-to-back. Interacts with the co-chaperonin GroES.

The protein localises to the cytoplasm. It catalyses the reaction ATP + H2O + a folded polypeptide = ADP + phosphate + an unfolded polypeptide.. Functionally, together with its co-chaperonin GroES, plays an essential role in assisting protein folding. The GroEL-GroES system forms a nano-cage that allows encapsulation of the non-native substrate proteins and provides a physical environment optimized to promote and accelerate protein folding. The polypeptide is Chaperonin GroEL (Bacillus cereus).